Reading from the N-terminus, the 274-residue chain is Bis(5'-nucleosyl)-tetraphosphatase, symmetrical (274 aa).

Belongs to the Ap4A hydrolase family.

It carries out the reaction P(1),P(4)-bis(5'-adenosyl) tetraphosphate + H2O = 2 ADP + 2 H(+). Its function is as follows. Hydrolyzes diadenosine 5',5'''-P1,P4-tetraphosphate to yield ADP. This Shewanella baltica (strain OS223) protein is Bis(5'-nucleosyl)-tetraphosphatase, symmetrical.